The chain runs to 375 residues: Vasculin (375 aa).

Disordered stretches follow at residues 49–109 (SSDA…TSEI) and 356–375 (DSVQ…SDDE). Polar residues predominate over residues 96-108 (MKSQLHSENNTSE). Over residues 365-375 (TSSSSDTSDDE) the composition is skewed to low complexity.

Belongs to the vasculin family.

The protein localises to the nucleus. Functions as a GC-rich promoter-specific transactivating transcription factor. This Xenopus tropicalis (Western clawed frog) protein is Vasculin (gpbp1).